Here is a 327-residue protein sequence, read N- to C-terminus: Tartrate-resistant acid phosphatase type 5 (327 aa).

Residues 1–22 (MDTWMVLLGLQILLLPLLAHCT) form the signal peptide. Positions 35, 73, 76, and 112 each coordinate Fe cation. Residues asparagine 118 and asparagine 149 are each glycosylated (N-linked (GlcNAc...) asparagine). Cysteine 163 and cysteine 221 are oxidised to a cystine. Fe cation contacts are provided by histidine 207, histidine 242, and histidine 244.

In terms of assembly, exists either as monomer or, after proteolytic processing, as a dimer of two chains linked by disulfide bond(s). The cofactor is Fe cation. In terms of tissue distribution, characteristic constituent of osteoclasts and some mononuclear preosteoclasts. Preferentially expressed in skeletal tissues.

It is found in the lysosome. It catalyses the reaction a phosphate monoester + H2O = an alcohol + phosphate. Its function is as follows. May play a role in the process of bone resorption. The osteoclastic trap acts on nucleotide tri- and diphosphates with higher affinity, compared with other substrates. In Rattus norvegicus (Rat), this protein is Tartrate-resistant acid phosphatase type 5 (Acp5).